We begin with the raw amino-acid sequence, 623 residues long: MPHSDELDAGDVLAVENLNIAFMQEQQKIAAVRNLSFSLQRGETLAIVGESGSGKSVTALALMRLLEQAGGLVQCDKMLLQRRSREVIELSEQSAAQMRHVRGADMAMIFQEPMTSLNPVFAVGEQIAESIRLHQNASREEAMVEAKRMLDQVRIPEAQTILSRYPHQLSGGMRQRVMIAMALSCRPAVLIADEPTTALDVTIQAQILQLIKVLQKEMSMGVIFITHDMGVVAEIADRVLVMYQGEAVETGSVEQIFHAPQHPYTRALLAAVPQLGAMKGLDYPRRFPLISLEHPAKQEPPIEQKTVVDGEPVLRVRNLVTRFPLRSGLLNRVTREVHAVEKVSFDLWPGETLSLVGESGSGKSTTGRALLRLVESQGGEIIFNGQRIDTLSPCKLQALRRDIQFIFQDPYASLDPRQTIGDSIIEPLRVHGLLPGKEAAARVAWLLERVGLLPEHAWRYPHEFSGGQRQRICIARALALNPKVIIADEAVSALDVSIRGQIINLLLDLQRDFGIAYLFISHDMAVVERISHRVAVMYLGQIVEIGPRRAVFENPQHPYTRKLLAAVPVAEPSRQRPQRVLLSDDLPSNIHLRGEEVAAVSLQCVGPGHYVAQPQSEYAFMRR.

2 ABC transporter domains span residues 15-269 (VENL…RALL) and 314-564 (LRVR…RKLL). ATP-binding positions include 49 to 56 (GESGSGKS) and 357 to 364 (GESGSGKS).

It belongs to the ABC transporter superfamily. Glutathione importer (TC 3.A.1.5.11) family. The complex is composed of two ATP-binding proteins (GsiA), two transmembrane proteins (GsiC and GsiD) and a solute-binding protein (GsiB).

It is found in the cell inner membrane. The enzyme catalyses glutathione(out) + ATP + H2O = glutathione(in) + ADP + phosphate + H(+). Its function is as follows. Part of the ABC transporter complex GsiABCD involved in glutathione import. Responsible for energy coupling to the transport system. This is Glutathione import ATP-binding protein GsiA from Escherichia coli O6:H1 (strain CFT073 / ATCC 700928 / UPEC).